The primary structure comprises 431 residues: Galactose-3-O-sulfotransferase 3 (431 aa).

At 1 to 19 the chain is on the cytoplasmic side; it reads MPPILQRLQQSTKMMSHRK. Residues 20 to 40 traverse the membrane as a helical; Signal-anchor for type II membrane protein segment; the sequence is ILLLVLGCSTVSLLIHQGSQL. Topologically, residues 41–431 are lumenal; the sequence is SWYPKLFPLS…RALPRIPQGT (391 aa). 4 N-linked (GlcNAc...) asparagine glycosylation sites follow: asparagine 91, asparagine 110, asparagine 177, and asparagine 302. Residues 400-431 are disordered; sequence KRRGGVRSRPESVLDNPPPRPIRALPRIPQGT. The segment covering 421-431 has biased composition (low complexity); it reads IRALPRIPQGT.

The protein belongs to the galactose-3-O-sulfotransferase family. Mg(2+) is required as a cofactor.

Its subcellular location is the golgi apparatus. The protein localises to the golgi stack membrane. Its pathway is protein modification; carbohydrate sulfation. Transfers a sulfate to position 3 of non-reducing beta-galactosyl residues in N-glycans and core2-branched O-glycans. Has high activity towards Gal-beta-1,4-GlcNAc, Gal-beta-1,4(Fuc-alpha-1,3)GlcNAc and lower activity towards Gal-beta-1,3(Fuc-alpha-1,4)GlcNAc. This chain is Galactose-3-O-sulfotransferase 3 (Gal3st3), found in Mus musculus (Mouse).